We begin with the raw amino-acid sequence, 40 residues long: Photosystem II reaction center protein J (40 aa).

A helical membrane pass occupies residues 8–28; sequence IPLWIIGTVTGLLVIGLIGIF.

This sequence belongs to the PsbJ family. PSII is composed of 1 copy each of membrane proteins PsbA, PsbB, PsbC, PsbD, PsbE, PsbF, PsbH, PsbI, PsbJ, PsbK, PsbL, PsbM, PsbT, PsbX, PsbY, PsbZ, Psb30/Ycf12, at least 3 peripheral proteins of the oxygen-evolving complex and a large number of cofactors. It forms dimeric complexes.

It is found in the plastid. It localises to the chloroplast thylakoid membrane. Functionally, one of the components of the core complex of photosystem II (PSII). PSII is a light-driven water:plastoquinone oxidoreductase that uses light energy to abstract electrons from H(2)O, generating O(2) and a proton gradient subsequently used for ATP formation. It consists of a core antenna complex that captures photons, and an electron transfer chain that converts photonic excitation into a charge separation. The protein is Photosystem II reaction center protein J of Ipomoea purpurea (Common morning glory).